The following is a 313-amino-acid chain: Ribosomal RNA small subunit methyltransferase H (313 aa).

Residues 35-37 (GGH), aspartate 55, phenylalanine 79, aspartate 100, and glutamine 107 each bind S-adenosyl-L-methionine.

It belongs to the methyltransferase superfamily. RsmH family.

The protein localises to the cytoplasm. It catalyses the reaction cytidine(1402) in 16S rRNA + S-adenosyl-L-methionine = N(4)-methylcytidine(1402) in 16S rRNA + S-adenosyl-L-homocysteine + H(+). In terms of biological role, specifically methylates the N4 position of cytidine in position 1402 (C1402) of 16S rRNA. The chain is Ribosomal RNA small subunit methyltransferase H from Burkholderia thailandensis (strain ATCC 700388 / DSM 13276 / CCUG 48851 / CIP 106301 / E264).